A 499-amino-acid polypeptide reads, in one-letter code: Glycerol kinase (499 aa).

Position 13 (T13) interacts with ADP. ATP-binding residues include T13, T14, and S15. T13 serves as a coordination point for sn-glycerol 3-phosphate. R17 is a binding site for ADP. Sn-glycerol 3-phosphate contacts are provided by R83, E84, Y135, and D245. Glycerol is bound by residues R83, E84, Y135, D245, and Q246. ADP-binding residues include T267 and G310. Residues T267, G310, Q314, and A411 each coordinate ATP. ADP contacts are provided by A411 and N415.

The protein belongs to the FGGY kinase family.

The enzyme catalyses glycerol + ATP = sn-glycerol 3-phosphate + ADP + H(+). Its pathway is polyol metabolism; glycerol degradation via glycerol kinase pathway; sn-glycerol 3-phosphate from glycerol: step 1/1. Its activity is regulated as follows. Inhibited by fructose 1,6-bisphosphate (FBP). In terms of biological role, key enzyme in the regulation of glycerol uptake and metabolism. Catalyzes the phosphorylation of glycerol to yield sn-glycerol 3-phosphate. The polypeptide is Glycerol kinase (Xylella fastidiosa (strain M23)).